The primary structure comprises 39 residues: Large ribosomal subunit protein bL36 (39 aa).

It belongs to the bacterial ribosomal protein bL36 family.

The chain is Large ribosomal subunit protein bL36 from Pediococcus pentosaceus (strain ATCC 25745 / CCUG 21536 / LMG 10740 / 183-1w).